Consider the following 224-residue polypeptide: Ribose-5-phosphate isomerase A (224 aa).

Substrate contacts are provided by residues T26–T29, D82–D85, and K95–G98. Catalysis depends on E104, which acts as the Proton acceptor. K122 serves as a coordination point for substrate.

The protein belongs to the ribose 5-phosphate isomerase family. In terms of assembly, homodimer.

It carries out the reaction aldehydo-D-ribose 5-phosphate = D-ribulose 5-phosphate. It functions in the pathway carbohydrate degradation; pentose phosphate pathway; D-ribose 5-phosphate from D-ribulose 5-phosphate (non-oxidative stage): step 1/1. In terms of biological role, catalyzes the reversible conversion of ribose-5-phosphate to ribulose 5-phosphate. The protein is Ribose-5-phosphate isomerase A of Lactococcus lactis subsp. cremoris (strain MG1363).